The following is a 444-amino-acid chain: UDP-N-acetylmuramate--L-alanine ligase (444 aa).

110–116 (GAHGKTS) lines the ATP pocket.

It belongs to the MurCDEF family.

The protein resides in the cytoplasm. The catalysed reaction is UDP-N-acetyl-alpha-D-muramate + L-alanine + ATP = UDP-N-acetyl-alpha-D-muramoyl-L-alanine + ADP + phosphate + H(+). It participates in cell wall biogenesis; peptidoglycan biosynthesis. Its function is as follows. Cell wall formation. This is UDP-N-acetylmuramate--L-alanine ligase from Streptococcus pneumoniae (strain P1031).